The sequence spans 434 residues: Eukaryotic translation initiation factor 3 subunit E (434 aa).

Residues 219-392 form the PCI domain; the sequence is FFNHPKGRDL…GHVVMGTQPL (174 aa).

The protein belongs to the eIF-3 subunit E family. In terms of assembly, component of the eukaryotic translation initiation factor 3 (eIF-3) complex. The eIF-3 complex interacts with pix. Interacts with mxt.

The protein localises to the cytoplasm. Its function is as follows. Component of the eukaryotic translation initiation factor 3 (eIF-3) complex, which is involved in protein synthesis of a specialized repertoire of mRNAs and, together with other initiation factors, stimulates binding of mRNA and methionyl-tRNAi to the 40S ribosome. The eIF-3 complex specifically targets and initiates translation of a subset of mRNAs involved in cell proliferation. The chain is Eukaryotic translation initiation factor 3 subunit E (eIF3-S6) from Drosophila pseudoobscura pseudoobscura (Fruit fly).